Consider the following 452-residue polypeptide: Mitochondrial import inner membrane translocase subunit TIM44 (452 aa).

A Phosphothreonine modification is found at threonine 128. Residue 166–173 coordinates ATP; it reads SGEKLGKT. An N6-succinyllysine modification is found at lysine 177. Position 180 is a phosphoserine (serine 180). The residue at position 217 (lysine 217) is an N6-succinyllysine.

Belongs to the Tim44 family. As to quaternary structure, probable component of the PAM complex at least composed of a mitochondrial HSP70 protein, GRPEL1 or GRPEL2, TIMM44, TIMM16/PAM16 and TIMM14/DNAJC19. The complex interacts with the TIMM23 component of the TIM23 complex. Interacts with SLC25A4/ANT1 and SLC25A5/ANT2; leading to inhibit the presequence translocase TIMM23, thereby promoting stabilization of PINK1.

The protein localises to the mitochondrion inner membrane. Functionally, essential component of the PAM complex, a complex required for the translocation of transit peptide-containing proteins from the inner membrane into the mitochondrial matrix in an ATP-dependent manner. Recruits mitochondrial HSP70 to drive protein translocation into the matrix using ATP as an energy source. This chain is Mitochondrial import inner membrane translocase subunit TIM44 (Timm44), found in Mus musculus (Mouse).